Reading from the N-terminus, the 225-residue chain is Urease accessory protein UreF (225 aa).

It belongs to the UreF family. As to quaternary structure, ureD, UreF and UreG form a complex that acts as a GTP-hydrolysis-dependent molecular chaperone, activating the urease apoprotein by helping to assemble the nickel containing metallocenter of UreC. The UreE protein probably delivers the nickel.

Its subcellular location is the cytoplasm. In terms of biological role, required for maturation of urease via the functional incorporation of the urease nickel metallocenter. The sequence is that of Urease accessory protein UreF from Geobacillus kaustophilus (strain HTA426).